The sequence spans 330 residues: Protein-lysine N-methyltransferase EEF2KMT (330 aa).

Met-1 bears the N-acetylmethionine mark. S-adenosyl-L-methionine contacts are provided by residues Trp-139, 165-167 (GSG), Trp-228, and Ala-247.

The protein belongs to the class I-like SAM-binding methyltransferase superfamily. EEF2KMT family. Interacts with FAM86B2 and FAM86C1P.

Its subcellular location is the cytoplasm. The enzyme catalyses L-lysyl-[protein] + 3 S-adenosyl-L-methionine = N(6),N(6),N(6)-trimethyl-L-lysyl-[protein] + 3 S-adenosyl-L-homocysteine + 3 H(+). In terms of biological role, catalyzes the trimethylation of eukaryotic elongation factor 2 (EEF2) on 'Lys-525'. The sequence is that of Protein-lysine N-methyltransferase EEF2KMT from Homo sapiens (Human).